The primary structure comprises 562 residues: SPI-1 type 3 secretion system secretin (562 aa).

An N-terminal signal peptide occupies residues 1–24; it reads MKTHILLARVLACAALVLVTPGYS.

Belongs to the bacterial secretin family. T3SS SctC subfamily. As to quaternary structure, the core secretion machinery of the T3SS is composed of approximately 20 different proteins, including cytoplasmic components, a base, an export apparatus and a needle. This subunit is part of the base, which anchors the injectisome in the bacterial cell envelope. Forms a stable homooligomeric complex. The complex is composed of 15 subunits.

Its subcellular location is the cell outer membrane. Its function is as follows. Component of the type III secretion system (T3SS), also called injectisome, which is used to inject bacterial effector proteins into eukaryotic host cells. Forms a ring-shaped multimeric structure with an apparent central pore in the outer membrane. In Salmonella typhimurium (strain LT2 / SGSC1412 / ATCC 700720), this protein is SPI-1 type 3 secretion system secretin.